The sequence spans 364 residues: Ribosomal RNA large subunit methyltransferase F (364 aa).

The segment at 1–52 (MPKPAIKTAAKLAMSSAGKRGKPSTPKSLAKPQTTKPKTASKLKAKHGEQKR) is disordered. A compositionally biased stretch (polar residues) spans 25–38 (TPKSLAKPQTTKPK).

Belongs to the methyltransferase superfamily. METTL16/RlmF family.

Its subcellular location is the cytoplasm. The catalysed reaction is adenosine(1618) in 23S rRNA + S-adenosyl-L-methionine = N(6)-methyladenosine(1618) in 23S rRNA + S-adenosyl-L-homocysteine + H(+). Its function is as follows. Specifically methylates the adenine in position 1618 of 23S rRNA. This Shewanella sp. (strain ANA-3) protein is Ribosomal RNA large subunit methyltransferase F.